A 387-amino-acid chain; its full sequence is Beta-alanyl-dopamine/carcinine hydrolase (387 aa).

This sequence belongs to the peptidase C45 family. The unprocessed protein forms homodimers. May form heterodimers composed of a 15 kDa alpha subunit and a 30 kDa beta subunit. The protein is synthesized as a 43 kDa precursor which is then self-processed into a 15 kDa alpha subunit and a 30 kDa beta subunit. Processing appears to be necessary for beta-alanyl-dopamine/carcinine hydrolase activity. The beta subunit carries the beta-alanyl-dopamine/carcinine hydrolase activity. In terms of tissue distribution, expressed in body, head, optic lobes and retina (at protein level). Expressed in photoreceptor cells R1-R6 in the lamina and in photoreceptor cells R7 and R8 in the medulla (at protein level).

The protein resides in the cell projection. It is found in the axon. The protein localises to the cytoplasm. It catalyses the reaction carcinine + H2O = histamine + beta-alanine. The enzyme catalyses beta-alanyl-dopamine + H2O = dopamine + beta-alanine. In the cuticle, catalyzes the hydrolysis of beta-alanyl-dopamine releasing dopamine and beta-alanine; dopamine is a metabolite involved in the pigmentation and sclerotization of the insect cuticle. In the photoreceptor cells, catalyzes the hydrolysis of carcinine releasing histamine and beta-alanine contributing to the recycling of the neurotransmitter histamine in the optical nerve system. Also, regulates the cuticular hydrocarbon composition in females. In Drosophila melanogaster (Fruit fly), this protein is Beta-alanyl-dopamine/carcinine hydrolase.